The following is a 373-amino-acid chain: 4-hydroxy-3-methylbut-2-en-1-yl diphosphate synthase (flavodoxin) (373 aa).

[4Fe-4S] cluster-binding residues include C270, C273, C305, and E312.

Belongs to the IspG family. [4Fe-4S] cluster serves as cofactor.

It carries out the reaction (2E)-4-hydroxy-3-methylbut-2-enyl diphosphate + oxidized [flavodoxin] + H2O + 2 H(+) = 2-C-methyl-D-erythritol 2,4-cyclic diphosphate + reduced [flavodoxin]. Its pathway is isoprenoid biosynthesis; isopentenyl diphosphate biosynthesis via DXP pathway; isopentenyl diphosphate from 1-deoxy-D-xylulose 5-phosphate: step 5/6. Its function is as follows. Converts 2C-methyl-D-erythritol 2,4-cyclodiphosphate (ME-2,4cPP) into 1-hydroxy-2-methyl-2-(E)-butenyl 4-diphosphate. The chain is 4-hydroxy-3-methylbut-2-en-1-yl diphosphate synthase (flavodoxin) from Vibrio atlanticus (strain LGP32) (Vibrio splendidus (strain Mel32)).